A 126-amino-acid polypeptide reads, in one-letter code: Nuclear transport factor 2B (126 aa).

Residue Ser2 is modified to N-acetylserine. One can recognise an NTF2 domain in the interval 9-123; sequence VSKAFVEHYY…FYVFNDIFRL (115 aa).

As to quaternary structure, interacts with RAN1. As to expression, expressed in roots, stems, leaves and flowers, and, at low levels, in siliques.

The protein resides in the cytoplasm. It localises to the nucleus. It is found in the nucleus envelope. Functionally, facilitates protein transport into the nucleus. Interacts with various nucleoporins and with Ran-GDP. Could be part of a multicomponent system of cytosolic factors that assemble at the pore complex during nuclear import. The protein is Nuclear transport factor 2B of Arabidopsis thaliana (Mouse-ear cress).